The primary structure comprises 1063 residues: Mediator of RNA polymerase II transcription subunit 15 (1063 aa).

A compositionally biased stretch (low complexity) spans 149–175 (LQQSQIQQQRQQQQQQSQQPQQTQQPQ). Disordered stretches follow at residues 149–194 (LQQS…SGSV), 286–342 (QQQQ…NATN), 422–482 (SQNA…QPIN), 500–544 (NKAR…AFTK), and 728–789 (TASI…SVGN). 2 stretches are compositionally biased toward polar residues: residues 176-192 (ASSP…QRSG) and 301-310 (PQGNVGAQSL). Residues 311 to 342 (QSMSPQDQPSTQQQQPQRTAAPPNNPNVNATN) show a composition bias toward low complexity. Residues 422–442 (SQNAPNTNKLGNPQPDNTGNP) show a composition bias toward polar residues. A compositionally biased stretch (low complexity) spans 443–460 (QAFSQQAFAQQQQQQQQQ). 2 stretches are compositionally biased toward polar residues: residues 461–482 (LHRT…QPIN) and 500–527 (NKAR…PNLD). Composition is skewed to low complexity over residues 528 to 542 (TSST…PSAF) and 733 to 758 (QQQQ…SVSS). Polar residues predominate over residues 766 to 776 (SIPNAQPSVPG). Residue Ser948 is modified to Phosphoserine.

The protein belongs to the Mediator complex subunit 15 family. As to quaternary structure, component of the Mediator complex. Component of a med15-hrp1 subcomplex, which flexibly associates with the other Mediator components.

The protein resides in the nucleus. Component of the Mediator complex, a coactivator involved in the regulated transcription of nearly all RNA polymerase II-dependent genes. Mediator functions as a bridge to convey information from gene-specific regulatory proteins to the basal RNA polymerase II transcription machinery. Mediator is recruited to promoters by direct interactions with regulatory proteins and serves as a scaffold for the assembly of a functional preinitiation complex with RNA polymerase II and the general transcription factors. Component of a med15-hrp1 subcomplex, linking the Mediator complex to the chromatin-remodeling activity of hrp1 at a distinct subset of hrp1-bound gene promoters. This Schizosaccharomyces pombe (strain 972 / ATCC 24843) (Fission yeast) protein is Mediator of RNA polymerase II transcription subunit 15 (med15).